A 1009-amino-acid polypeptide reads, in one-letter code: DNA polymerase catalytic subunit (1009 aa).

This sequence belongs to the DNA polymerase type-B family.

It is found in the host nucleus. The catalysed reaction is DNA(n) + a 2'-deoxyribonucleoside 5'-triphosphate = DNA(n+1) + diphosphate. This chain is DNA polymerase catalytic subunit (9), found in Saimiri sciureus (Common squirrel monkey).